The sequence spans 638 residues: Chaperone protein HtpG (638 aa).

An a; substrate-binding region spans residues 1 to 346 (MSQQETHGFQ…SNDLPLNVSR (346 aa)). Residues 347–563 (EILQDNKVTT…EGEMSTQMIK (217 aa)) form a b region. The c stretch occupies residues 564-638 (LMQAAGQDVP…MNQMLLASVK (75 aa)).

The protein belongs to the heat shock protein 90 family. As to quaternary structure, homodimer.

It is found in the cytoplasm. In terms of biological role, molecular chaperone. Has ATPase activity. This Shewanella pealeana (strain ATCC 700345 / ANG-SQ1) protein is Chaperone protein HtpG.